Here is a 426-residue protein sequence, read N- to C-terminus: Tryptophan--tRNA ligase (426 aa).

The 'HIGH' region signature appears at 66 to 74 (PSGEMHLGN). Positions 314–318 (KMSSS) match the 'KMSKS' region motif.

Belongs to the class-I aminoacyl-tRNA synthetase family.

Its subcellular location is the cytoplasm. The enzyme catalyses tRNA(Trp) + L-tryptophan + ATP = L-tryptophyl-tRNA(Trp) + AMP + diphosphate + H(+). The protein is Tryptophan--tRNA ligase of Thermoplasma volcanium (strain ATCC 51530 / DSM 4299 / JCM 9571 / NBRC 15438 / GSS1).